The primary structure comprises 381 residues: Probable tRNA sulfurtransferase (381 aa).

The THUMP domain maps to 57–160 (EKGIEKLKSV…NKAYVYSKKI (104 aa)). ATP contacts are provided by residues 177-178 (ML), 202-203 (YF), Arg-259, Gly-281, and Gln-290.

The protein belongs to the ThiI family.

It localises to the cytoplasm. It catalyses the reaction [ThiI sulfur-carrier protein]-S-sulfanyl-L-cysteine + a uridine in tRNA + 2 reduced [2Fe-2S]-[ferredoxin] + ATP + H(+) = [ThiI sulfur-carrier protein]-L-cysteine + a 4-thiouridine in tRNA + 2 oxidized [2Fe-2S]-[ferredoxin] + AMP + diphosphate. It carries out the reaction [ThiS sulfur-carrier protein]-C-terminal Gly-Gly-AMP + S-sulfanyl-L-cysteinyl-[cysteine desulfurase] + AH2 = [ThiS sulfur-carrier protein]-C-terminal-Gly-aminoethanethioate + L-cysteinyl-[cysteine desulfurase] + A + AMP + 2 H(+). It functions in the pathway cofactor biosynthesis; thiamine diphosphate biosynthesis. In terms of biological role, catalyzes the ATP-dependent transfer of a sulfur to tRNA to produce 4-thiouridine in position 8 of tRNAs, which functions as a near-UV photosensor. Also catalyzes the transfer of sulfur to the sulfur carrier protein ThiS, forming ThiS-thiocarboxylate. This is a step in the synthesis of thiazole, in the thiamine biosynthesis pathway. The sulfur is donated as persulfide by IscS. This chain is Probable tRNA sulfurtransferase, found in Clostridium kluyveri (strain NBRC 12016).